Consider the following 117-residue polypeptide: NADH-ubiquinone oxidoreductase chain 3 (117 aa).

3 helical membrane passes run 4–24 (ILIY…LGLI), 57–77 (FFLL…LLPL), and 88–108 (WPLT…FHEW).

It belongs to the complex I subunit 3 family.

It is found in the mitochondrion membrane. It catalyses the reaction a ubiquinone + NADH + 5 H(+)(in) = a ubiquinol + NAD(+) + 4 H(+)(out). Functionally, core subunit of the mitochondrial membrane respiratory chain NADH dehydrogenase (Complex I) that is believed to belong to the minimal assembly required for catalysis. Complex I functions in the transfer of electrons from NADH to the respiratory chain. The immediate electron acceptor for the enzyme is believed to be ubiquinone. This is NADH-ubiquinone oxidoreductase chain 3 (ND3) from Heterololigo bleekeri (Spear squid).